The sequence spans 1399 residues: DNA-directed RNA polymerase subunit beta' (1399 aa).

The Zn(2+) site is built by cysteine 70, cysteine 72, cysteine 85, and cysteine 88. Residues aspartate 460, aspartate 462, and aspartate 464 each contribute to the Mg(2+) site. Zn(2+) is bound by residues cysteine 814, cysteine 888, cysteine 895, and cysteine 898.

Belongs to the RNA polymerase beta' chain family. In terms of assembly, the RNAP catalytic core consists of 2 alpha, 1 beta, 1 beta' and 1 omega subunit. When a sigma factor is associated with the core the holoenzyme is formed, which can initiate transcription. Requires Mg(2+) as cofactor. Zn(2+) serves as cofactor.

It carries out the reaction RNA(n) + a ribonucleoside 5'-triphosphate = RNA(n+1) + diphosphate. In terms of biological role, DNA-dependent RNA polymerase catalyzes the transcription of DNA into RNA using the four ribonucleoside triphosphates as substrates. The polypeptide is DNA-directed RNA polymerase subunit beta' (Pseudomonas entomophila (strain L48)).